Here is a 314-residue protein sequence, read N- to C-terminus: Testisin (314 aa).

The N-terminal stretch at 1–19 (MGARGALLLALLLARAGLR) is a signal peptide. A propeptide spanning residues 20–41 (KPESQEAAPLSGPCGRRVITSR) is cleaved from the precursor. 2 disulfide bridges follow: Cys-33-Cys-157 and Cys-67-Cys-83. Residues 42–286 (IVGGEDAELG…HFEWIQKLMA (245 aa)) form the Peptidase S1 domain. Catalysis depends on charge relay system residues His-82 and Asp-137. Asn-167 and Asn-200 each carry an N-linked (GlcNAc...) asparagine glycan. Cystine bridges form between Cys-171-Cys-244, Cys-204-Cys-223, and Cys-234-Cys-262. Ser-238 serves as the catalytic Charge relay system. Asn-273 carries an N-linked (GlcNAc...) asparagine glycan. A lipid anchor (GPI-anchor amidated serine) is attached at Ser-288. The propeptide at 289 to 314 (GMSQPDPSWPLLFFPLLWALPLLGPV) is removed in mature form.

It belongs to the peptidase S1 family. As to expression, expressed predominantly in premeiotic testicular germ cells, mostly late pachytene and diplotene spermatocytes.

It is found in the cell membrane. Functionally, could regulate proteolytic events associated with testicular germ cell maturation. This chain is Testisin (PRSS21), found in Homo sapiens (Human).